We begin with the raw amino-acid sequence, 514 residues long: Maturase K (514 aa).

This sequence belongs to the intron maturase 2 family. MatK subfamily.

The protein resides in the plastid. Its subcellular location is the chloroplast. Usually encoded in the trnK tRNA gene intron. Probably assists in splicing its own and other chloroplast group II introns. The sequence is that of Maturase K from Plantago argentea (Silver plantain).